The chain runs to 477 residues: Epoxyalcohol synthase CYP5164B1 (477 aa).

C421 lines the heme pocket.

Belongs to the cytochrome P450 family. The cofactor is heme.

It catalyses the reaction (9S)-hydroperoxy-(10E,12Z)-octadecadienoate = (11S)-hydroxy-(9S,10S)-epoxy-(12Z)-octadecenoate. The enzyme catalyses (13S)-hydroperoxy-(9Z,11E)-octadecadienoate = 11-hydroxy-12,13-epoxy-(9Z)-octadecenoate. Its pathway is lipid metabolism; oxylipin biosynthesis. Its function is as follows. Cytochrome P450 epoxyalcohol synthase involved in the metabolism of oxylipins 'ectocarpins' natural products, such as hybridalactone, ecklonilactones and derivatives. Isomerizes the hydroperoxides into epoxyalcohols via epoxyallylic radical. Can use linoleic acid 9-hydroperoxide ((9S,10E,12Z)-9-hydroperoxy-10,12-octadecadienoic, 9-HPOD) as preferred substrate to produce (9S,10S,11S,12Z)-9,10-epoxy-11-hydroxy-12-octadecenoic acid and, to a lower extent, active with linoleate 13-hydroperoxide ((9Z,11E,13S)-13-hydroperoxy-9,11-octadecadienoic, 13-HPOD) to produce 11-hydroxy-12,13-epoxy-9-octadecenoic acid. No activity toward alpha-linolenic acid 9- and 13-hydroperoxides, and toward eicosapentaenoic acid 15-hydroperoxide. This is Epoxyalcohol synthase CYP5164B1 from Ectocarpus siliculosus (Brown alga).